A 338-amino-acid polypeptide reads, in one-letter code: Ketol-acid reductoisomerase (NADP(+)) (338 aa).

In terms of domain architecture, KARI N-terminal Rossmann spans 1–181 (MNVYYDKDCD…GGGRSGIIET (181 aa)). Residues 24 to 27 (YGSQ), R47, S50, S52, and 82 to 85 (DEFQ) each bind NADP(+). Residue H107 is part of the active site. G133 contributes to the NADP(+) binding site. The KARI C-terminal knotted domain maps to 182-327 (TFKDETETDL…AKLRGMMPWI (146 aa)). Residues D190, E194, E226, and E230 each contribute to the Mg(2+) site. S251 lines the substrate pocket.

It belongs to the ketol-acid reductoisomerase family. Mg(2+) serves as cofactor.

The catalysed reaction is (2R)-2,3-dihydroxy-3-methylbutanoate + NADP(+) = (2S)-2-acetolactate + NADPH + H(+). It carries out the reaction (2R,3R)-2,3-dihydroxy-3-methylpentanoate + NADP(+) = (S)-2-ethyl-2-hydroxy-3-oxobutanoate + NADPH + H(+). The protein operates within amino-acid biosynthesis; L-isoleucine biosynthesis; L-isoleucine from 2-oxobutanoate: step 2/4. Its pathway is amino-acid biosynthesis; L-valine biosynthesis; L-valine from pyruvate: step 2/4. Involved in the biosynthesis of branched-chain amino acids (BCAA). Catalyzes an alkyl-migration followed by a ketol-acid reduction of (S)-2-acetolactate (S2AL) to yield (R)-2,3-dihydroxy-isovalerate. In the isomerase reaction, S2AL is rearranged via a Mg-dependent methyl migration to produce 3-hydroxy-3-methyl-2-ketobutyrate (HMKB). In the reductase reaction, this 2-ketoacid undergoes a metal-dependent reduction by NADPH to yield (R)-2,3-dihydroxy-isovalerate. The protein is Ketol-acid reductoisomerase (NADP(+)) of Psychrobacter cryohalolentis (strain ATCC BAA-1226 / DSM 17306 / VKM B-2378 / K5).